The chain runs to 400 residues: MLKVEMLSTGDEVLHGQIVDTNAAWLADFFFHQGLPLSRRNTVGDNLDDLVTILRERSQHADVLIVNGGLGPTSDDLSALAAATAKGEGLVLHEAWLKEMERYFHERGRVMAPSNRKQAELPASAEFINNPVGTACGFAVQLNRCLMFFTPGVPSEFKVMVEHEILPRLRERFSLPQPPVCLRLTTFGRSESDLAQSLDSLQLPPGVTMGYRSSMPIIELKLTGPASEEQAMEKLWLDVKRVAGQSVIFEGTEGLPAQISRELQSRQFSLTLSEQFTGGLLALQLSRAGAPLLACEVVPSQEETLAQTAHWITERRANHFAGLALAVSGFENEHLNFALATPDGTFALRVRFSTTRYSQAIRQEVCAMMALNMLRRWLNDQDIASEHGWIEVVESMTLSV.

The protein belongs to the CinA family.

The sequence is that of CinA-like protein from Escherichia coli (strain SMS-3-5 / SECEC).